Consider the following 524-residue polypeptide: Excitatory amino acid transporter 3 (524 aa).

The Cytoplasmic portion of the chain corresponds to 1-18 (MGKPARKGCDWKRFLRNN). Residues 19-38 (WLLLSTVVAVVLGIVIGVLV) form a helical membrane-spanning segment. The Extracellular segment spans residues 39-61 (REYSKLSNLEKFYFSFPGEILMR). Residues 62-82 (MLKLVILPLIVSSMITGVATL) form a helical membrane-spanning segment. At 83–93 (DSNVSGKIGLR) the chain is on the cytoplasmic side. A helical transmembrane segment spans residues 94 to 114 (AVVYYFCTTLIAVILGIVLVV). Residues Y98, T101, and T102 each coordinate Na(+). Over 115-205 (SIKPGVTQKV…KTKEYKVVGM (91 aa)) the chain is Extracellular. 2 N-linked (GlcNAc...) asparagine glycosylation sites follow: N178 and N195. Residues 206-229 (YSDGINVLGLIVFCLVLGIVIGRK) traverse the membrane as a helical segment. Over 230–238 (WEKGQILVD) the chain is Cytoplasmic. The helical transmembrane segment at 239–266 (FFNALSDATMKIVQIIMCYMPIGILFLI) threads the bilayer. The Extracellular portion of the chain corresponds to 267–286 (AGKIIEVEDWEIFRKLGLYM). Residues 287–308 (ATVLSGLAIHSIVILPLIYFII) traverse the membrane as a helical segment. Residues 309-313 (VRKNP) are Cytoplasmic-facing. The segment at residues 314 to 344 (FQFAMGMAQALLTALMISSSSATLPVTFRCA) is an intramembrane region (discontinuously helical). L-aspartate-binding residues include S331 and S333. Topologically, residues 345–353 (EEKNRVDKR) are cytoplasmic. Residues 354–380 (ITRFVLPVGATINMDGTALYEAVAAVF) traverse the membrane as a helical segment. Na(+)-binding residues include G362, T364, N366, and D368. T370 provides a ligand contact to L-aspartate. The Extracellular portion of the chain corresponds to 381–393 (IAQLNDLDLSVGQ). The segment at residues 394–427 (IITISVTATAASIGAAGVPQPGLVTMVIVLSAVG) is an intramembrane region (discontinuously helical). Na(+) is bound by residues S405, I406, and A408. V411 lines the L-aspartate pocket. Residues 428–440 (LPAEDVTLIIAVD) lie on the Extracellular side of the membrane. A helical membrane pass occupies residues 441–462 (WLLDRFRTMVNVLGDAFGTGIV). The L-aspartate site is built by R447, T448, and N451. Na(+) is bound by residues N451 and D455. The Cytoplasmic portion of the chain corresponds to 463–524 (EKLSKKELEQ…TISFTQTSQF (62 aa)). S517 and S522 each carry phosphoserine.

This sequence belongs to the dicarboxylate/amino acid:cation symporter (DAACS) (TC 2.A.23) family. SLC1A1 subfamily. As to quaternary structure, homotrimer. Interacts with ARL6IP5. Interacts with RTN2 (via N-terminus); the interaction promotes cell surface expression of SLC1A1. Interacts with SORCS2; this interaction is important for normal expression at the cell membrane.

Its subcellular location is the cell membrane. The protein resides in the apical cell membrane. It is found in the synapse. The protein localises to the synaptosome. It localises to the early endosome membrane. Its subcellular location is the late endosome membrane. The protein resides in the recycling endosome membrane. The catalysed reaction is K(+)(in) + L-glutamate(out) + 3 Na(+)(out) + H(+)(out) = K(+)(out) + L-glutamate(in) + 3 Na(+)(in) + H(+)(in). It carries out the reaction K(+)(in) + L-aspartate(out) + 3 Na(+)(out) + H(+)(out) = K(+)(out) + L-aspartate(in) + 3 Na(+)(in) + H(+)(in). It catalyses the reaction D-aspartate(out) + K(+)(in) + 3 Na(+)(out) + H(+)(out) = D-aspartate(in) + K(+)(out) + 3 Na(+)(in) + H(+)(in). The enzyme catalyses K(+)(in) + L-cysteine(out) + 3 Na(+)(out) + H(+)(out) = K(+)(out) + L-cysteine(in) + 3 Na(+)(in) + H(+)(in). Its function is as follows. Sodium-dependent, high-affinity amino acid transporter that mediates the uptake of L-glutamate and also L-aspartate and D-aspartate. Can also transport L-cysteine. Functions as a symporter that transports one amino acid molecule together with two or three Na(+) ions and one proton, in parallel with the counter-transport of one K(+) ion. Mediates Cl(-) flux that is not coupled to amino acid transport; this avoids the accumulation of negative charges due to aspartate and Na(+) symport. Plays an important role in L-glutamate and L-aspartate reabsorption in renal tubuli. Plays a redundant role in the rapid removal of released glutamate from the synaptic cleft, which is essential for terminating the postsynaptic action of glutamate. Contributes to glutathione biosynthesis and protection against oxidative stress via its role in L-glutamate and L-cysteine transport. Negatively regulated by ARL6IP5. This is Excitatory amino acid transporter 3 (SLC1A1) from Bos taurus (Bovine).